The sequence spans 32 residues: MSDIN-like toxin proprotein 11 (32 aa).

The propeptide occupies 1–10; sequence MSDINATRLP. Positions 1 to 32 are disordered; that stretch reads MSDINATRLPGMEPPSPMPCVGDADNFTLTRG. The cyclopeptide (Gly-Pro) cross-link spans 11 to 19; that stretch reads GMEPPSPMP. The propeptide occupies 20 to 32; sequence CVGDADNFTLTRG.

This sequence belongs to the MSDIN fungal toxin family. Processed by the macrocyclase-peptidase enzyme POPB to yield a toxic cyclic nonapeptide. POPB first removes 10 residues from the N-terminus. Conformational trapping of the remaining peptide forces the enzyme to release this intermediate rather than proceed to macrocyclization. The enzyme rebinds the remaining peptide in a different conformation and catalyzes macrocyclization of the N-terminal 9 residues.

In terms of biological role, probable toxin that belongs to the MSDIN-like toxin family responsible for a large number of food poisoning cases and deaths. In Amanita bisporigera (Destroying angel), this protein is MSDIN-like toxin proprotein 11.